We begin with the raw amino-acid sequence, 257 residues long: UPF0246 protein lpl1317 (257 aa).

The protein belongs to the UPF0246 family.

The sequence is that of UPF0246 protein lpl1317 from Legionella pneumophila (strain Lens).